A 47-amino-acid polypeptide reads, in one-letter code: Cytochrome b559 subunit beta (47 aa).

The chain crosses the membrane as a helical span at residues 23-39 (WLAVHALAIPSVFFLGA). His-27 lines the heme pocket.

This sequence belongs to the PsbE/PsbF family. In terms of assembly, heterodimer of an alpha subunit and a beta subunit. PSII is composed of 1 copy each of membrane proteins PsbA, PsbB, PsbC, PsbD, PsbE, PsbF, PsbH, PsbI, PsbJ, PsbK, PsbL, PsbM, PsbT, PsbX, PsbY, Psb30/Ycf12, peripheral proteins PsbO, CyanoQ (PsbQ), PsbU, PsbV and a large number of cofactors. It forms dimeric complexes. Heme b is required as a cofactor.

Its subcellular location is the cellular thylakoid membrane. In terms of biological role, this b-type cytochrome is tightly associated with the reaction center of photosystem II (PSII). PSII is a light-driven water:plastoquinone oxidoreductase that uses light energy to abstract electrons from H(2)O, generating O(2) and a proton gradient subsequently used for ATP formation. It consists of a core antenna complex that captures photons, and an electron transfer chain that converts photonic excitation into a charge separation. In Prochlorococcus marinus subsp. pastoris (strain CCMP1986 / NIES-2087 / MED4), this protein is Cytochrome b559 subunit beta.